The chain runs to 129 residues: M-zodatoxin-Lt8j (129 aa).

The first 20 residues, M1–S20, serve as a signal peptide directing secretion. Residues K21 to R60 constitute a propeptide that is removed on maturation.

Belongs to the cationic peptide 06 (cytoinsectotoxin) family. Expressed by the venom gland.

The protein resides in the secreted. Its function is as follows. Insecticidal, cytolytic and antimicrobial peptide. Forms voltage-dependent, ion-permeable channels in membranes. At high concentration causes cell membrane lysis. This chain is M-zodatoxin-Lt8j (cit 1-9), found in Lachesana tarabaevi (Spider).